The sequence spans 556 residues: Delta-1-pyrroline-5-carboxylate dehydrogenase, mitochondrial (556 aa).

A mitochondrion-targeting transit peptide spans 1-17 (MLRARSAVSQSWKGFKT). Residues lysine 226 and 279–283 (GSVPT) each bind NAD(+). Glutamate 307 functions as the Proton acceptor in the catalytic mechanism. The Nucleophile role is filled by cysteine 341. Glutamate 440 provides a ligand contact to NAD(+). Residue serine 506 coordinates substrate.

The protein belongs to the aldehyde dehydrogenase family.

Its subcellular location is the mitochondrion matrix. It catalyses the reaction L-glutamate 5-semialdehyde + NAD(+) + H2O = L-glutamate + NADH + 2 H(+). It functions in the pathway amino-acid degradation; L-proline degradation into L-glutamate; L-glutamate from L-proline: step 2/2. Functionally, irreversible conversion of delta-1-pyrroline-5-carboxylate (P5C), derived either from proline or ornithine, to glutamate. This is a necessary step in the pathway interconnecting the urea and tricarboxylic acid cycles. This is Delta-1-pyrroline-5-carboxylate dehydrogenase, mitochondrial (aldh4a1) from Danio rerio (Zebrafish).